A 349-amino-acid polypeptide reads, in one-letter code: Meiotic recombination protein DMC1 homolog (349 aa).

Glycine 138–threonine 145 provides a ligand contact to ATP. Residue arginine 240 participates in dsDNA binding. Residues arginine 240, phenylalanine 243, arginine 246, arginine 252, and arginine 320 each coordinate ssDNA. Residues arginine 246 and arginine 252 each contribute to the dsDNA site.

This sequence belongs to the RecA family. DMC1 subfamily. Double stacked ring-shaped homooctamer.

The protein resides in the nucleus. In terms of biological role, may participate in meiotic recombination. The sequence is that of Meiotic recombination protein DMC1 homolog (LIM15) from Lilium longiflorum (Trumpet lily).